The sequence spans 97 residues: Mapk-regulated corepressor-interacting protein 1 (97 aa).

Polar residues predominate over residues 1 to 26 (MTSSSTPRMHTYKRTSSPRSPTNTGE). 2 disordered regions span residues 1–27 (MTSSSTPRMHTYKRTSSPRSPTNTGEL) and 54–97 (QNHE…SKKS). Basic and acidic residues-rich tracts occupy residues 54-68 (QNHERNDRGPQEYVE) and 84-97 (SDLKKRNTQDSKKS). Positions 80–84 (PVDLS) match the PXDLS motif motif.

This sequence belongs to the MCRIP family.

Its subcellular location is the nucleus. The protein localises to the cytoplasm. It localises to the stress granule. In terms of biological role, may play a role in the regulation of the epithelial-mesenchymal transition. This is Mapk-regulated corepressor-interacting protein 1 (mcrip1) from Danio rerio (Zebrafish).